The sequence spans 104 residues: MAAKIRRDDEVIVLTGKDKGKRGKVKNVLSSGKVIVEGINLVKKHQKPVPALNQPGGIVEKEAAIQVSNVAIFNATTGKADRVGFRFEDGKKVRFFKSNSETIK.

The protein belongs to the universal ribosomal protein uL24 family. Part of the 50S ribosomal subunit.

Functionally, one of two assembly initiator proteins, it binds directly to the 5'-end of the 23S rRNA, where it nucleates assembly of the 50S subunit. Its function is as follows. One of the proteins that surrounds the polypeptide exit tunnel on the outside of the subunit. In Escherichia coli O81 (strain ED1a), this protein is Large ribosomal subunit protein uL24.